The following is a 292-amino-acid chain: Rhodanese-like domain-containing protein 11, chloroplastic (292 aa).

The N-terminal 56 residues, 1–56 (MESLSLPVLNPLLASGSNLFRNQHSRMTSSMVSSLKSPIGGTSLSTVRRFGVGVVR), are a transit peptide targeting the chloroplast. The Rhodanese domain occupies 101–224 (SLSNKPLLDV…AQDEDLVTEG (124 aa)). Residue Cys-184 is the Cysteine persulfide intermediate of the active site.

Its subcellular location is the plastid. The protein resides in the chloroplast. The sequence is that of Rhodanese-like domain-containing protein 11, chloroplastic (STR11) from Arabidopsis thaliana (Mouse-ear cress).